The following is a 64-amino-acid chain: Neurotoxin lambda-MeuTx (64 aa).

Residues Met-1 to Ala-18 form the signal peptide. Positions Glu-19 to Arg-27 are excised as a propeptide. 3 disulfides stabilise this stretch: Cys-29/Cys-43, Cys-36/Cys-49, and Cys-42/Cys-58.

This sequence belongs to the scorpion calcin-like family. In terms of tissue distribution, expressed by the venom gland.

It localises to the secreted. Functionally, voltage-gated potassium channel (Kv) inhibitor. In addition it may increase intracellular calcium release through the activation of nuclear inositol 1,4,5-trisphosphate receptors (ITPR) of cardiomyocytes, thereby causing an increase in the contraction frequency of these cells. This chain is Neurotoxin lambda-MeuTx, found in Mesobuthus eupeus (Lesser Asian scorpion).